The sequence spans 293 residues: tRNA pseudouridine synthase B (293 aa).

D39 serves as the catalytic Nucleophile.

This sequence belongs to the pseudouridine synthase TruB family. Type 1 subfamily.

The enzyme catalyses uridine(55) in tRNA = pseudouridine(55) in tRNA. Responsible for synthesis of pseudouridine from uracil-55 in the psi GC loop of transfer RNAs. The polypeptide is tRNA pseudouridine synthase B (Streptococcus thermophilus (strain ATCC BAA-250 / LMG 18311)).